The chain runs to 128 residues: Azurin (128 aa).

The Plastocyanin-like domain occupies 1 to 128 (AECKVDVDST…SMMKGAVVLK (128 aa)). C3 and C26 are joined by a disulfide. Cu cation is bound by residues H46, C112, H117, and M121.

Its subcellular location is the periplasm. Its function is as follows. Transfers electrons from cytochrome c551 to cytochrome oxidase. The chain is Azurin from Pseudomonas chlororaphis (Pseudomonas aureofaciens).